Reading from the N-terminus, the 329-residue chain is Phenylalanine--tRNA ligase alpha subunit (329 aa).

Glutamate 253 is a binding site for Mg(2+).

The protein belongs to the class-II aminoacyl-tRNA synthetase family. Phe-tRNA synthetase alpha subunit type 1 subfamily. As to quaternary structure, tetramer of two alpha and two beta subunits. Mg(2+) is required as a cofactor.

The protein resides in the cytoplasm. The enzyme catalyses tRNA(Phe) + L-phenylalanine + ATP = L-phenylalanyl-tRNA(Phe) + AMP + diphosphate + H(+). The sequence is that of Phenylalanine--tRNA ligase alpha subunit from Teredinibacter turnerae (strain ATCC 39867 / T7901).